Consider the following 296-residue polypeptide: ATP synthase peripheral stalk subunit OSCP, mitochondrial (296 aa).

Belongs to the ATPase delta chain family. Component of the ATP synthase complex composed at least of ATP5F1A/subunit alpha, ATP5F1B/subunit beta, ATP5MC1/subunit c (homooctomer), MT-ATP6/subunit a, MT-ATP8/subunit 8, ATP5ME/subunit e, ATP5MF/subunit f, ATP5MG/subunit g, ATP5MK/subunit k, ATP5MJ/subunit j, ATP5F1C/subunit gamma, ATP5F1D/subunit delta, ATP5F1E/subunit epsilon, ATP5PF/subunit F6, ATP5PB/subunit b, ATP5PD/subunit d, ATP5PO/subunit OSCP. ATP synthase complex consists of a soluble F(1) head domain (subunits alpha(3) and beta(3)) - the catalytic core - and a membrane F(0) domain - the membrane proton channel (subunits c, a, 8, e, f, g, k and j). These two domains are linked by a central stalk (subunits gamma, delta, and epsilon) rotating inside the F1 region and a stationary peripheral stalk (subunits F6, b, d, and OSCP).

It is found in the mitochondrion. It localises to the mitochondrion inner membrane. Functionally, subunit OSCP, of the mitochondrial membrane ATP synthase complex (F(1)F(0) ATP synthase or Complex V) that produces ATP from ADP in the presence of a proton gradient across the membrane which is generated by electron transport complexes of the respiratory chain. ATP synthase complex consist of a soluble F(1) head domain - the catalytic core - and a membrane F(1) domain - the membrane proton channel. These two domains are linked by a central stalk rotating inside the F(1) region and a stationary peripheral stalk. During catalysis, ATP synthesis in the catalytic domain of F(1) is coupled via a rotary mechanism of the central stalk subunits to proton translocation. In vivo, can only synthesize ATP although its ATP hydrolase activity can be activated artificially in vitro. Part of the complex F(0) domain. Part of the complex F(0) domain and the peripheric stalk, which acts as a stator to hold the catalytic alpha(3)beta(3) subcomplex and subunit a/ATP6 static relative to the rotary elements. In Dictyostelium discoideum (Social amoeba), this protein is ATP synthase peripheral stalk subunit OSCP, mitochondrial.